Reading from the N-terminus, the 279-residue chain is 3-methyl-2-oxobutanoate hydroxymethyltransferase (279 aa).

Mg(2+) contacts are provided by aspartate 44 and aspartate 83. Residues 44 to 45 (DS), aspartate 83, and lysine 112 contribute to the 3-methyl-2-oxobutanoate site. Residue glutamate 114 participates in Mg(2+) binding. Residue glutamate 181 is the Proton acceptor of the active site.

The protein belongs to the PanB family. In terms of assembly, homodecamer; pentamer of dimers. Mg(2+) serves as cofactor.

The protein resides in the cytoplasm. It catalyses the reaction 3-methyl-2-oxobutanoate + (6R)-5,10-methylene-5,6,7,8-tetrahydrofolate + H2O = 2-dehydropantoate + (6S)-5,6,7,8-tetrahydrofolate. It participates in cofactor biosynthesis; coenzyme A biosynthesis. Functionally, catalyzes the reversible reaction in which hydroxymethyl group from 5,10-methylenetetrahydrofolate is transferred onto alpha-ketoisovalerate to form ketopantoate. The polypeptide is 3-methyl-2-oxobutanoate hydroxymethyltransferase (Nitrosopumilus maritimus (strain SCM1)).